The following is a 336-amino-acid chain: Atypical chemokine receptor 1 (336 aa).

The Extracellular portion of the chain corresponds to 1–63 (MGNCLHPAEL…CNLLDDSALP (63 aa)). Residues asparagine 16, asparagine 27, and asparagine 33 are each glycosylated (N-linked (GlcNAc...) asparagine). 2 cysteine pairs are disulfide-bonded: cysteine 51–cysteine 276 and cysteine 129–cysteine 195. Residues 64–84 (FFILVSVLGILASGIVLFMFF) form a helical membrane-spanning segment. Residues 85 to 95 (RPLFHWQLCPG) are Cytoplasmic-facing. A helical membrane pass occupies residues 96–116 (WPVLAQLAVGSALFSIVVPIL). The Extracellular portion of the chain corresponds to 117-129 (APGLGNTRSSALC). Residues 130–153 (SLGYCVWYGSAFAQALLLGCHASL) form a helical membrane-spanning segment. At 154–166 (GPKLGADQVPGLT) the chain is on the cytoplasmic side. Residues 167–187 (LGLSVGLWGVAALLTLPVTLA) form a helical membrane-spanning segment. The Extracellular segment spans residues 188-207 (SGASGGLCTPVYSMELKALQ). Residues 208–228 (ATHAVACLAIFVLLPLGLFGA) form a helical membrane-spanning segment. Topologically, residues 229–244 (KGLKKALGMGPGPWMN) are cytoplasmic. Residues 245 to 265 (ILWAWFIFWWPHGVVLGLDFL) form a helical membrane-spanning segment. The Extracellular portion of the chain corresponds to 266–287 (VRSKLLLLSTCLAQQALDLLLN). A helical membrane pass occupies residues 288 to 308 (LAEALAILHCVATPLLLALFC). Residues 309–336 (HQATRTLLPSLPLPEGWSSHLDTLGSKS) lie on the Cytoplasmic side of the membrane.

The protein belongs to the G-protein coupled receptor 1 family. Atypical chemokine receptor subfamily.

It is found in the early endosome. It localises to the recycling endosome. The protein resides in the membrane. Atypical chemokine receptor that controls chemokine levels and localization via high-affinity chemokine binding that is uncoupled from classic ligand-driven signal transduction cascades, resulting instead in chemokine sequestration, degradation, or transcytosis. Also known as interceptor (internalizing receptor) or chemokine-scavenging receptor or chemokine decoy receptor. Has a promiscuous chemokine-binding profile, interacting with inflammatory chemokines of both the CXC and the CC subfamilies but not with homeostatic chemokines. Acts as a receptor for chemokines including CCL2, CCL5, CCL7, CCL11, CCL13, CCL14, CCL17, CXCL5, CXCL6, IL8/CXCL8, CXCL11, GRO, RANTES, MCP-1 and TARC. May regulate chemokine bioavailability and, consequently, leukocyte recruitment through two distinct mechanisms: when expressed in endothelial cells, it sustains the abluminal to luminal transcytosis of tissue-derived chemokines and their subsequent presentation to circulating leukocytes; when expressed in erythrocytes, serves as blood reservoir of cognate chemokines but also as a chemokine sink, buffering potential surges in plasma chemokine levels. This Papio hamadryas (Hamadryas baboon) protein is Atypical chemokine receptor 1 (ACKR1).